Reading from the N-terminus, the 291-residue chain is uncharacterized protein (291 aa).

NAD(+) is bound by residues 5 to 19 and T97; that span reads AFIGLGVMGFPMAGH. The active site involves K172. Residue K240 coordinates NAD(+).

Belongs to the HIBADH-related family.

This is an uncharacterized protein from Shewanella frigidimarina (strain NCIMB 400).